We begin with the raw amino-acid sequence, 517 residues long: Ribonuclease Y (517 aa).

Residues 1–21 (MIESLIALIAAIVGLGIGYLV) traverse the membrane as a helical segment. A KH domain is found at 207–273 (LINVINIKND…TKVIELLVED (67 aa)). Residues 333 to 426 (ALAHSLEVAH…VCAADTLSAA (94 aa)) enclose the HD domain.

This sequence belongs to the RNase Y family.

The protein localises to the cell membrane. In terms of biological role, endoribonuclease that initiates mRNA decay. The protein is Ribonuclease Y of Campylobacter jejuni subsp. jejuni serotype O:2 (strain ATCC 700819 / NCTC 11168).